A 121-amino-acid chain; its full sequence is HTH-type transcriptional regulator MerD (121 aa).

In terms of domain architecture, HTH merR-type spans 3–72 (AYPVSRLALD…LDALARLCRA (70 aa)). A DNA-binding region (H-T-H motif) is located at residues 6-25 (VSRLALDAGVSVHIVRDYLL).

The polypeptide is HTH-type transcriptional regulator MerD (merD) (Pseudomonas aeruginosa).